We begin with the raw amino-acid sequence, 142 residues long: UPF0336 protein PPA1896 (142 aa).

Belongs to the UPF0336 family.

The protein is UPF0336 protein PPA1896 of Cutibacterium acnes (strain DSM 16379 / KPA171202) (Propionibacterium acnes).